The chain runs to 214 residues: Pyridoxine/pyridoxamine 5'-phosphate oxidase (214 aa).

Substrate contacts are provided by residues 9-12 (RKDY) and Lys-67. Residues 62 to 67 (RMVLLK), 77 to 78 (FT), Arg-83, Lys-84, and Gln-106 each bind FMN. Residues Tyr-124, Arg-128, and Ser-132 each contribute to the substrate site. Residues 141–142 (QS) and Trp-186 each bind FMN. 192-194 (RLH) serves as a coordination point for substrate. Arg-196 provides a ligand contact to FMN.

This sequence belongs to the pyridoxamine 5'-phosphate oxidase family. As to quaternary structure, homodimer. FMN is required as a cofactor.

The catalysed reaction is pyridoxamine 5'-phosphate + O2 + H2O = pyridoxal 5'-phosphate + H2O2 + NH4(+). It catalyses the reaction pyridoxine 5'-phosphate + O2 = pyridoxal 5'-phosphate + H2O2. Its pathway is cofactor metabolism; pyridoxal 5'-phosphate salvage; pyridoxal 5'-phosphate from pyridoxamine 5'-phosphate: step 1/1. It functions in the pathway cofactor metabolism; pyridoxal 5'-phosphate salvage; pyridoxal 5'-phosphate from pyridoxine 5'-phosphate: step 1/1. In terms of biological role, catalyzes the oxidation of either pyridoxine 5'-phosphate (PNP) or pyridoxamine 5'-phosphate (PMP) into pyridoxal 5'-phosphate (PLP). The polypeptide is Pyridoxine/pyridoxamine 5'-phosphate oxidase (Nostoc sp. (strain PCC 7120 / SAG 25.82 / UTEX 2576)).